The chain runs to 359 residues: Serpentine receptor class epsilon-26 (359 aa).

The next 7 membrane-spanning stretches (helical) occupy residues 29–49 (CAIS…VFVS), 66–86 (IGVP…ITIL), 127–147 (VAGF…LAIV), 172–192 (FIII…FNIL), 195–215 (YVLN…YYYI), 256–276 (LVFV…ALVL), and 282–302 (FFMH…FLVV).

The protein belongs to the nematode receptor-like protein sre family.

It is found in the membrane. This is Serpentine receptor class epsilon-26 (sre-26) from Caenorhabditis elegans.